Consider the following 2058-residue polypeptide: Unconventional myosin-X (2058 aa).

Residue M1 is modified to N-acetylmethionine. One can recognise a Myosin motor domain in the interval 63-739 (EGVDDMASLT…LEQKLEKRRE (677 aa)). ATP is bound by residues N104, Y113, 160–165 (GAGKTE), and N215. An actin-binding region spans residues 619–641 (LHSLMATLSSSNPFFVRCIKPNM). 3 IQ domains span residues 742–763 (VSHA…KQYR), 764–787 (KVLY…RFLH), and 788–817 (LKKA…EKRE). Residues 814-883 (EKREQEEKKK…LTRELEKQKE (70 aa)) form an SAH region. 2 disordered regions span residues 819–840 (EEKK…RERE) and 847–866 (ELRA…EALQ). The segment covering 847–861 (ELRAQQEEETRKQQE) has biased composition (basic and acidic residues). The stretch at 884-934 (NKQVEEILRLEKEIEDLQRMKEQQELSLTEASLQKLQERRDQELRRLEEEA) forms a coiled coil. Phosphoserine is present on residues S962, S965, and S968. The interval 964-1090 (GSEFSSELAE…DLPSPDGDYD (127 aa)) is disordered. Acidic residues predominate over residues 989–1003 (PEEEVDEGFEADDDA). Positions 1040–1049 (VVPTSPSADS) are enriched in polar residues. Residues 1060 to 1071 (SGSLHNSSSGES) show a composition bias toward low complexity. A Phosphothreonine modification is found at T1158. 2 consecutive PH domains span residues 1212-1310 (EALK…QVHA) and 1392-1497 (EFIV…NVTD). A MyTH4 domain is found at 1547–1695 (LPYGDINLNL…PSRDEIEALI (149 aa)). Positions 1700-2044 (MTSTVYCHGG…AYISMIVKKR (345 aa)) constitute an FERM domain.

Belongs to the TRAFAC class myosin-kinesin ATPase superfamily. Myosin family. As to quaternary structure, monomer, when in an inactive conformation in the cytosol. Homodimer in its active, membrane-bound conformation; antiparallel coiled coil-mediated dimer formation. Interacts strongly with CALM3 and weakly with CALM, the CALM3 interaction is essential for function in filopodial extension and motility. Interacts with ECPAS. Interacts with NEO1. Interacts with ITGB1 and ITGB3. Interacts with VASP. Interacts with DCC and ITGB5; the presence of DCC inhibits ITGB5 binding. Interacts with tubulin; ITGB5 or DCC binding inhibits tubulin binding. The initiator methionine for isoform Headless is removed. In terms of tissue distribution, ubiquitous.

The protein resides in the cytoplasm. It localises to the cytosol. Its subcellular location is the cell projection. The protein localises to the lamellipodium. It is found in the ruffle. The protein resides in the cytoskeleton. It localises to the filopodium tip. Its subcellular location is the cell cortex. The protein localises to the filopodium membrane. Its function is as follows. Myosins are actin-based motor molecules with ATPase activity. Unconventional myosins serve in intracellular movements. MYO10 binds to actin filaments and actin bundles and functions as a plus end-directed motor. Moves with higher velocity and takes larger steps on actin bundles than on single actin filaments. The tail domain binds to membranous compartments containing phosphatidylinositol 3,4,5-trisphosphate or integrins, and mediates cargo transport along actin filaments. Regulates cell shape, cell spreading and cell adhesion. Stimulates the formation and elongation of filopodia. In hippocampal neurons it induces the formation of dendritic filopodia by trafficking the actin-remodeling protein VASP to the tips of filopodia, where it promotes actin elongation. Plays a role in formation of the podosome belt in osteoclasts. Functionally, functions as a dominant-negative regulator of isoform 1, suppressing its filopodia-inducing and axon outgrowth-promoting activities. In hippocampal neurons, it increases VASP retention in spine heads to induce spine formation and spine head expansion. The protein is Unconventional myosin-X (MYO10) of Homo sapiens (Human).